A 606-amino-acid chain; its full sequence is Ectonucleoside triphosphate diphosphohydrolase 7 (606 aa).

The Cytoplasmic portion of the chain corresponds to 1–28 (MARISFSYLCPASWYFTVPTVSPFLRQR). Residues 29 to 49 (VAFLGLFFIPCVLLLLLIMDL) form a helical membrane-spanning segment. The Vesicular portion of the chain corresponds to 50-548 (RHWATSLPRD…PAHGSWLRLS (499 aa)). The active-site Proton acceptor is the Glu217. Asn330 carries an N-linked (GlcNAc...) asparagine glycan. A disulfide bond links Cys448 and Cys477. The helical transmembrane segment at 549 to 569 (FVYNHYLFFACTLVVLLAIVL) threads the bilayer. Over 570-606 (YLLRIHRIHRRQTRASAPLDLLWIEQVVPMIGVQVGP) the chain is Cytoplasmic.

This sequence belongs to the GDA1/CD39 NTPase family. The cofactor is Ca(2+). It depends on Mg(2+) as a cofactor. As to expression, widely expressed. Expressed at high level in brain, kidney, liver, testis and small intestin. Weakly expressed in lung, thymus and heart.

It localises to the cytoplasmic vesicle membrane. The enzyme catalyses a ribonucleoside 5'-triphosphate + H2O = a ribonucleoside 5'-diphosphate + phosphate + H(+). The catalysed reaction is UTP + H2O = UDP + phosphate + H(+). It catalyses the reaction GTP + H2O = GDP + phosphate + H(+). It carries out the reaction CTP + H2O = CDP + phosphate + H(+). The enzyme catalyses ATP + H2O = ADP + phosphate + H(+). In terms of biological role, catalyzes the hydrolysis of nucleoside triphosphates and diphosphates in a calcium- or magnesium-dependent manner. Preferentially hydrolyzes nucleoside 5'-triphosphates, with substrate preference for UTP &gt; GTP &gt; CTP. Hydrolyzes nucleoside diphosphates only to a minor extent. In contrast to its human ortholog is able to hydrolyze ATP. In the epithelial cells of small intestine controls luminal ATP levels, therefore regulating Th17-cell development. The chain is Ectonucleoside triphosphate diphosphohydrolase 7 (Entpd7) from Mus musculus (Mouse).